We begin with the raw amino-acid sequence, 800 residues long: Mitogen-activated protein kinase kinase kinase 20 (800 aa).

An N-acetylserine modification is found at Ser2. A phosphoserine; by autocatalysis mark is found at Ser2, Ser3, and Ser7. Residues 16 to 277 form the Protein kinase domain; it reads LQFFENCGGG…SLPDKCNSFL (262 aa). ATP is bound by residues 22 to 30 and Lys45; that span reads CGGGSFGSV. The active-site Proton acceptor is Asp133. Phosphothreonine; by autocatalysis is present on Thr161. Position 165 is a phosphoserine; by autocatalysis (Ser165). Phosphoserine is present on Ser275. The segment at 287–308 is leucine-zipper; it reads IEATLERLKKLERDLSFKEQEL. At Ser302 the chain carries Phosphoserine; by autocatalysis. Phosphoserine occurs at positions 339, 429, 434, 454, and 567. Positions 339 to 410 constitute an SAM domain; the sequence is WTEDDVYCWV…KSAIEKLTHD (72 aa). Thr586 carries the phosphothreonine; by autocatalysis modification. Ser587 bears the Phosphoserine; by autocatalysis mark. Phosphoserine is present on residues Ser593 and Ser599. A Phosphothreonine modification is found at Thr628. Phosphoserine is present on residues Ser633, Ser637, and Ser648. Residues Ser649 and Ser660 each carry the phosphoserine; by autocatalysis modification. Over residues 652–666 the composition is skewed to polar residues; that stretch reads LNSRDSGFSSGNTDT. The segment at 652-800 is disordered; the sequence is LNSRDSGFSS…RGDHRGWRNF (149 aa). Residue Thr664 is modified to Phosphothreonine; by autocatalysis. Residues 667 to 678 are compositionally biased toward basic and acidic residues; sequence SSERGRYSDRSR. The segment at 670–713 is sensing domain (S); that stretch reads RGRYSDRSRNKYGRGSISLNSSPRGRYSGKSQHSTPSRGRYPGK. Position 685 is a phosphoserine (Ser685). Composition is skewed to polar residues over residues 686–706 and 717–726; these read ISLN…STPS and VSQSALNPHQ. A phosphoserine; by autocatalysis mark is found at Ser718 and Ser720. Ser727 and Ser733 each carry phosphoserine. The span at 728-738 shows a compositional bias: basic and acidic residues; it reads PDFKRSPRDLH. Thr742 bears the Phosphothreonine; by autocatalysis mark. Composition is skewed to basic and acidic residues over residues 750–763 and 785–800; these read PETD…DSKV and TNKE…WRNF. Residues 774 to 800 are C-terminal domain (CTD); it reads RKKPHRPSPAKTNKERARGDHRGWRNF.

This sequence belongs to the protein kinase superfamily. STE Ser/Thr protein kinase family. MAP kinase kinase kinase subfamily. As to quaternary structure, homodimer. Interacts with ZNF33A. Component of a signaling complex containing at least AKAP13, PKN1, MAPK14, MAP3K20 and MAP2K3. Within this complex, AKAP13 interacts directly with PKN1, which in turn recruits MAPK14, MAP2K3 and MAP3K20. Interacts with EIF2AK4/GCN2; promoting EIF2AK4/GCN2 kinase activity. Interacts with isoform ZAKbeta. In terms of assembly, interacts with isoform ZAKalpha. Requires Mg(2+) as cofactor. In terms of processing, activated by phosphorylation by PKN1, followed by autophosphorylation on Thr-161 and Ser-165. Autophosphorylation in response to ribotoxic stress promotes dissociation from colliding ribosomes and activation. In terms of tissue distribution, ubiquitously expressed. Isoform ZAKbeta is the predominant form in all tissues examined, except for liver, in which isoform ZAKalpha is more highly expressed.

The protein resides in the cytoplasm. It localises to the nucleus. The enzyme catalyses L-seryl-[protein] + ATP = O-phospho-L-seryl-[protein] + ADP + H(+). The catalysed reaction is L-threonyl-[protein] + ATP = O-phospho-L-threonyl-[protein] + ADP + H(+). With respect to regulation, activated in response to stress, such as ribosomal stress, osmotic shock and ionizing radiation. Activated by phosphorylation by PKN1, followed by autophosphorylation on Thr-161 and Ser-165. Inhibited by nilotinib, sorafenib, dabrafenib, rebastinib and vemurafenib. Selectively inhibited by N-(3)-((1H-Pyrazolo[3,4-b]pyridin-5-yl)ethynyl)benzenesulfonamide compound 3h. Selectively inhibited by 1,2,3-triazole benzenesulfonamides. Its function is as follows. Stress-activated component of a protein kinase signal transduction cascade that promotes programmed cell death in response to various stress, such as ribosomal stress, osmotic shock and ionizing radiation. Acts by catalyzing phosphorylation of MAP kinase kinases, leading to activation of the JNK (MAPK8/JNK1, MAPK9/JNK2 and/or MAPK10/JNK3) and MAP kinase p38 (MAPK11, MAPK12, MAPK13 and/or MAPK14) pathways. Activates JNK through phosphorylation of MAP2K4/MKK4 and MAP2K7/MKK7, and MAP kinase p38 gamma (MAPK12) via phosphorylation of MAP2K3/MKK3 and MAP2K6/MKK6. Involved in stress associated with adrenergic stimulation: contributes to cardiac decompensation during periods of acute cardiac stress. May be involved in regulation of S and G2 cell cycle checkpoint by mediating phosphorylation of CHEK2. Functionally, key component of the stress-activated protein kinase signaling cascade in response to ribotoxic stress or UV-B irradiation. Acts as the proximal sensor of ribosome collisions during the ribotoxic stress response (RSR): directly binds to the ribosome by inserting its flexible C-terminus into the ribosomal intersubunit space, thereby acting as a sentinel for colliding ribosomes. Upon ribosome collisions, activates either the stress-activated protein kinase signal transduction cascade or the integrated stress response (ISR), leading to programmed cell death or cell survival, respectively. Dangerous levels of ribosome collisions trigger the autophosphorylation and activation of MAP3K20, which dissociates from colliding ribosomes and phosphorylates MAP kinase kinases, leading to activation of the JNK and MAP kinase p38 pathways that promote programmed cell death. Less dangerous levels of ribosome collisions trigger the integrated stress response (ISR): MAP3K20 activates EIF2AK4/GCN2 independently of its protein-kinase activity, promoting EIF2AK4/GCN2-mediated phosphorylation of EIF2S1/eIF-2-alpha. Also part of the stress-activated protein kinase signaling cascade triggering the NLRP1 inflammasome in response to UV-B irradiation: ribosome collisions activate MAP3K20, which directly phosphorylates NLRP1, leading to activation of the NLRP1 inflammasome and subsequent pyroptosis. NLRP1 is also phosphorylated by MAP kinase p38 downstream of MAP3K20. Also acts as a histone kinase by phosphorylating histone H3 at 'Ser-28' (H3S28ph). In terms of biological role, isoform that lacks the C-terminal region that mediates ribosome-binding: does not act as a sensor of ribosome collisions in response to ribotoxic stress. May act as an antagonist of isoform ZAKalpha: interacts with isoform ZAKalpha, leading to decrease the expression of isoform ZAKalpha. This chain is Mitogen-activated protein kinase kinase kinase 20, found in Homo sapiens (Human).